The chain runs to 546 residues: Smad protein daf-8 (546 aa).

Residues 16–137 (AMAQKVLEET…YRWVELPTCQ (122 aa)) enclose the MH1 domain. Disordered regions lie at residues 234-268 (LQQS…FIPN) and 292-317 (ENFS…PIEP). Polar residues predominate over residues 292-302 (ENFSSENNGNR). Residues 349–546 (WLKLIYYEEG…APPRICSSRT (198 aa)) form the MH2 domain.

The protein belongs to the dwarfin/SMAD family. As to quaternary structure, homodimer. Interacts with R-SMAD daf-14 and co-SMAD daf-3. Interacts with orphan nuclear receptor nhr-69. Expressed in the excretory cell and gonadal distal tip cells (DTCs).

The protein resides in the cytoplasm. It localises to the nucleus. Probably a receptor-regulated SMAD (R-SMAD) that is an intracellular signal transducer and transcriptional modulator activated by TGF-beta-like daf-7 signaling. Plays a role in TGF-beta-like daf-7 signaling in regulating entry into a developmentally arrested larval state known as dauer, in response to harsh environmental conditions; partially redundant with R-SMAD daf-14. Plays a role in inhibiting mitosis and promoting a switch to meiosis in the germ line, perhaps by down-regulating lag-2 transcription in the gonadal distal tip cells (DTCs). In cooperation with orphan nuclear receptor nhr-69 modulates the Insulin/IGF-1-like signaling (IIS) pathway, perhaps by regulating expression of the potassium channel exp-2, which in turn modulates the secretion of the insulin-like peptide daf-28. The protein is Smad protein daf-8 of Caenorhabditis elegans.